The primary structure comprises 166 residues: Phospholipase A2 inhibitor clone 08 (166 aa).

The signal sequence occupies residues 1-19; sequence MRLILLSSLLLLGIFLANG. The 116-residue stretch at 46 to 161 folds into the C-type lectin domain; it reads LKGAFLTVHR…CDDNLLVVCE (116 aa). Disulfide bonds link Cys83–Cys160 and Cys138–Cys152. Asn122 carries an N-linked (GlcNAc...) asparagine glycan.

This sequence belongs to the alpha-type phospholipase A2 inhibitor family. As to quaternary structure, homotrimer; non-covalently linked. Expressed by the liver.

The protein resides in the secreted. In terms of biological role, this phospholipase A2 inhibitor binds directly phospholipase A2 in the presence or absence of calcium. This is Phospholipase A2 inhibitor clone 08 from Bothrops moojeni (Lance-headed viper).